The sequence spans 528 residues: Folylpolyglutamate synthase (528 aa).

Gly104–Gly107 serves as a coordination point for ATP. Ser134, Glu208, and His236 together coordinate Mg(2+). The ATP site is built by Arg351 and Asp365.

It belongs to the folylpolyglutamate synthase family. A monovalent cation is required as a cofactor.

It is found in the mitochondrion inner membrane. The protein localises to the mitochondrion matrix. The protein resides in the cytoplasm. It catalyses the reaction (6S)-5,6,7,8-tetrahydrofolyl-(gamma-L-Glu)(n) + L-glutamate + ATP = (6S)-5,6,7,8-tetrahydrofolyl-(gamma-L-Glu)(n+1) + ADP + phosphate + H(+). It functions in the pathway cofactor biosynthesis; tetrahydrofolylpolyglutamate biosynthesis. Functionally, catalyzes conversion of folates to polyglutamate derivatives allowing concentration of folate compounds in the cell and the intracellular retention of these cofactors, which are important substrates for most of the folate-dependent enzymes that are involved in one-carbon transfer reactions involved in purine, pyrimidine and amino acid synthesis. This is Folylpolyglutamate synthase (met-6) from Neurospora crassa (strain ATCC 24698 / 74-OR23-1A / CBS 708.71 / DSM 1257 / FGSC 987).